Consider the following 32-residue polypeptide: MNKGELVDAVMAKATVTKKQADAFILALDIVA.

It belongs to the bacterial histone-like protein family.

Histone-like DNA-binding protein which is capable of wrapping DNA to stabilize it, and thus to prevent its denaturation under extreme environmental conditions. This Synechocystis sp. (strain PCC 6701) protein is DNA-binding protein HU (hup).